Reading from the N-terminus, the 143-residue chain is Nucleoside diphosphate kinase (143 aa).

ATP contacts are provided by Lys-11, Phe-59, Arg-87, Thr-93, Arg-104, and Asn-114. His-117 (pros-phosphohistidine intermediate) is an active-site residue.

The protein belongs to the NDK family. Homotetramer. The cofactor is Mg(2+).

The protein localises to the cytoplasm. The catalysed reaction is a 2'-deoxyribonucleoside 5'-diphosphate + ATP = a 2'-deoxyribonucleoside 5'-triphosphate + ADP. It carries out the reaction a ribonucleoside 5'-diphosphate + ATP = a ribonucleoside 5'-triphosphate + ADP. In terms of biological role, major role in the synthesis of nucleoside triphosphates other than ATP. The ATP gamma phosphate is transferred to the NDP beta phosphate via a ping-pong mechanism, using a phosphorylated active-site intermediate. The polypeptide is Nucleoside diphosphate kinase (Sodalis glossinidius (strain morsitans)).